Reading from the N-terminus, the 216-residue chain is NADH-quinone oxidoreductase subunit C (216 aa).

This sequence belongs to the complex I 30 kDa subunit family. NDH-1 is composed of 14 different subunits. Subunits NuoB, C, D, E, F, and G constitute the peripheral sector of the complex.

The protein localises to the cell inner membrane. It catalyses the reaction a quinone + NADH + 5 H(+)(in) = a quinol + NAD(+) + 4 H(+)(out). In terms of biological role, NDH-1 shuttles electrons from NADH, via FMN and iron-sulfur (Fe-S) centers, to quinones in the respiratory chain. The immediate electron acceptor for the enzyme in this species is believed to be ubiquinone. Couples the redox reaction to proton translocation (for every two electrons transferred, four hydrogen ions are translocated across the cytoplasmic membrane), and thus conserves the redox energy in a proton gradient. In Francisella tularensis subsp. tularensis (strain FSC 198), this protein is NADH-quinone oxidoreductase subunit C.